We begin with the raw amino-acid sequence, 256 residues long: Floral homeotic protein APETALA 1 (256 aa).

One can recognise an MADS-box domain in the interval 1–61; sequence MGRGRVQLKR…GKLFEYSTDS (61 aa). In terms of domain architecture, K-box spans 88–178; it reads NTNWSMEYNR…FKQIKEREKI (91 aa).

Homodimer capable of binding to CArG-box sequences.

It localises to the nucleus. Its function is as follows. Transcription factor that promotes early floral meristem identity in synergy with LEAFY. Displays a redundant function with CAULIFLOWER in the up-regulation of LEAFY. Required subsequently for the transition of an inflorescence meristem into a floral meristem, and for the normal development of sepals and petals in flowers. Regulates positively B class homeotic proteins. In Citrus sinensis (Sweet orange), this protein is Floral homeotic protein APETALA 1 (AP1).